A 496-amino-acid polypeptide reads, in one-letter code: Cobyric acid synthase (496 aa).

The region spanning 264 to 458 (HTRIAVVAYP…LHGLFEDAAV (195 aa)) is the GATase cobBQ-type domain. Catalysis depends on cysteine 345, which acts as the Nucleophile. Histidine 450 is an active-site residue.

It belongs to the CobB/CobQ family. CobQ subfamily.

Its pathway is cofactor biosynthesis; adenosylcobalamin biosynthesis. Its function is as follows. Catalyzes amidations at positions B, D, E, and G on adenosylcobyrinic A,C-diamide. NH(2) groups are provided by glutamine, and one molecule of ATP is hydrogenolyzed for each amidation. This Acidovorax ebreus (strain TPSY) (Diaphorobacter sp. (strain TPSY)) protein is Cobyric acid synthase.